The following is a 367-amino-acid chain: Phosphoribosylaminoimidazole-succinocarboxamide synthase (367 aa).

It belongs to the SAICAR synthetase family.

It carries out the reaction 5-amino-1-(5-phospho-D-ribosyl)imidazole-4-carboxylate + L-aspartate + ATP = (2S)-2-[5-amino-1-(5-phospho-beta-D-ribosyl)imidazole-4-carboxamido]succinate + ADP + phosphate + 2 H(+). It functions in the pathway purine metabolism; IMP biosynthesis via de novo pathway; 5-amino-1-(5-phospho-D-ribosyl)imidazole-4-carboxamide from 5-amino-1-(5-phospho-D-ribosyl)imidazole-4-carboxylate: step 1/2. The chain is Phosphoribosylaminoimidazole-succinocarboxamide synthase from Aliivibrio fischeri (strain MJ11) (Vibrio fischeri).